Reading from the N-terminus, the 292-residue chain is 11-beta-hydroxysteroid dehydrogenase 1 (292 aa).

Residues 1–7 (MAFMKKY) lie on the Cytoplasmic side of the membrane. The helical; Signal-anchor for type II membrane protein transmembrane segment at 8-24 (LLPILGIFLAYYYYSAN) threads the bilayer. The Lumenal segment spans residues 25 to 292 (EEFRPEMLRG…KYNMERFINN (268 aa)). NADP(+) is bound by residues 41 to 67 (GASK…TARS) and 92 to 93 (TM). N-linked (GlcNAc...) asparagine glycosylation occurs at Asn95. 119 to 121 (NHI) lines the NADP(+) pocket. Ser170 lines the substrate pocket. Tyr183 acts as the Proton acceptor in catalysis. 183–187 (YSASK) lines the NADP(+) pocket. Residue Asn207 is glycosylated (N-linked (GlcNAc...) asparagine). Residues 216-222 (GLIDTDT) and 218-222 (IDTDT) contribute to the NADP(+) site.

Belongs to the short-chain dehydrogenases/reductases (SDR) family. In terms of assembly, homodimer. As to expression, liver, kidney, lung, hypothalamus, anterior pituitary and placenta.

The protein localises to the endoplasmic reticulum membrane. It carries out the reaction an 11beta-hydroxysteroid + NADP(+) = an 11-oxosteroid + NADPH + H(+). It catalyses the reaction corticosterone + NADP(+) = 11-dehydrocorticosterone + NADPH + H(+). The catalysed reaction is cortisone + NADPH + H(+) = cortisol + NADP(+). The enzyme catalyses a 7beta-hydroxysteroid + NADP(+) = a 7-oxosteroid + NADPH + H(+). It carries out the reaction 7-oxocholesterol + NADPH + H(+) = 7beta-hydroxycholesterol + NADP(+). It catalyses the reaction chenodeoxycholate + NADP(+) = 7-oxolithocholate + NADPH + H(+). The catalysed reaction is 7-oxolithocholate + NADPH + H(+) = ursodeoxycholate + NADP(+). The enzyme catalyses glycochenodeoxycholate + NADP(+) = 7-oxoglycolithocholate + NADPH + H(+). It carries out the reaction taurochenodeoxycholate + NADP(+) = 7-oxotaurolithocholate + NADPH + H(+). It catalyses the reaction tauroursodeoxycholate + NADP(+) = 7-oxotaurolithocholate + NADPH + H(+). The catalysed reaction is glycoursodeoxycholate + NADP(+) = 7-oxoglycolithocholate + NADPH + H(+). The enzyme catalyses 7-oxopregnenolone + NADPH + H(+) = 7beta-hydroxypregnenolone + NADP(+). It carries out the reaction 3beta,7alpha-dihydroxyandrost-5-en-17-one + NADP(+) = 3beta-hydroxy-5-androstene-7,17-dione + NADPH + H(+). It catalyses the reaction 3beta-hydroxy-5-androstene-7,17-dione + NADPH + H(+) = 3beta,7beta-dihydroxyandrost-5-en-17-one + NADP(+). The catalysed reaction is 3beta-hydroxy-5alpha-androstane-7,17-dione + NADPH + H(+) = 3beta,7beta-dihydroxy-5alpha-androstan-17-one + NADP(+). In terms of biological role, controls the reversible conversion of biologically active glucocorticoids such as cortisone to cortisol, and 11-dehydrocorticosterone to corticosterone in the presence of NADP(H). Participates in the corticosteroid receptor-mediated anti-inflammatory response, as well as metabolic and homeostatic processes. Plays a role in the secretion of aqueous humor in the eye, maintaining a normotensive, intraocular environment. Bidirectional in vitro, predominantly functions as a reductase in vivo, thereby increasing the concentration of active glucocorticoids. It has broad substrate specificity, besides glucocorticoids, it accepts other steroid and sterol substrates. Interconverts 7-oxo- and 7-hydroxy-neurosteroids such as 7-oxopregnenolone and 7beta-hydroxypregnenolone, 7-oxodehydroepiandrosterone (3beta-hydroxy-5-androstene-7,17-dione) and 7beta-hydroxydehydroepiandrosterone (3beta,7beta-dihydroxyandrost-5-en-17-one), among others. Catalyzes the stereo-specific conversion of the major dietary oxysterol, 7-ketocholesterol (7-oxocholesterol), into the more polar 7-beta-hydroxycholesterol metabolite. 7-oxocholesterol is one of the most important oxysterols, it participates in several events such as induction of apoptosis, accumulation in atherosclerotic lesions, lipid peroxidation, and induction of foam cell formation. Mediates the 7-oxo reduction of 7-oxolithocholate mainly to chenodeoxycholate, and to a lesser extent to ursodeoxycholate, both in its free form and when conjugated to glycine or taurine, providing a link between glucocorticoid activation and bile acid metabolism. Catalyzes the synthesis of 7-beta-25-dihydroxycholesterol from 7-oxo-25-hydroxycholesterol in vitro, which acts as a ligand for the G-protein-coupled receptor (GPCR) Epstein-Barr virus-induced gene 2 (EBI2) and may thereby regulate immune cell migration. In Ovis aries (Sheep), this protein is 11-beta-hydroxysteroid dehydrogenase 1 (HSD11B1).